Here is a 153-residue protein sequence, read N- to C-terminus: MFGKSTYPALEELQESLSSEQLRILKDQVESEGQDPAPQSQFNYAWGLIKSSNYKMQQQGISILSELYRDVPSMRRECLYYLALGSYKIGDYSNATRYADTLLKNEPENKQAQDLKKSIHEKVTQEGLIGIGIAGGALAVGVGILGALLRKKR.

Residues 1 to 127 (MFGKSTYPAL…SIHEKVTQEG (127 aa)) are Cytoplasmic-facing. A TPR repeat occupies 76–109 (RECLYYLALGSYKIGDYSNATRYADTLLKNEPEN). Residues 128–148 (LIGIGIAGGALAVGVGILGAL) form a helical membrane-spanning segment. Topologically, residues 149 to 153 (LRKKR) are mitochondrial intermembrane.

The protein belongs to the FIS1 family.

The protein localises to the mitochondrion outer membrane. Its function is as follows. Has a role in mitochondrial fission. Has a role in outer membrane fission but not matrix separation. This chain is Mitochondrial fission 1 protein (FIS1), found in Debaryomyces hansenii (strain ATCC 36239 / CBS 767 / BCRC 21394 / JCM 1990 / NBRC 0083 / IGC 2968) (Yeast).